A 432-amino-acid chain; its full sequence is Trigger factor (432 aa).

The PPIase FKBP-type domain maps to 161-246 (EDRVTIDFTG…LKKVEERELP (86 aa)).

This sequence belongs to the FKBP-type PPIase family. Tig subfamily. Homodimer and monomer. In vivo most of the ribosomes are in complex with monomeric TF. Uncomplexed TF, however, is in a monomer-dimer equilibrium with approximately two thirds of TF existing in a dimeric state.

It localises to the cytoplasm. The catalysed reaction is [protein]-peptidylproline (omega=180) = [protein]-peptidylproline (omega=0). Involved in protein export. Acts as a chaperone by maintaining the newly synthesized protein in an open conformation. Functions as a peptidyl-prolyl cis-trans isomerase. This Escherichia coli O6:K15:H31 (strain 536 / UPEC) protein is Trigger factor.